Here is a 125-residue protein sequence, read N- to C-terminus: Small ribosomal subunit protein uS12 (125 aa).

Aspartate 89 carries the post-translational modification 3-methylthioaspartic acid.

It belongs to the universal ribosomal protein uS12 family. Part of the 30S ribosomal subunit. Contacts proteins S8 and S17. May interact with IF1 in the 30S initiation complex.

With S4 and S5 plays an important role in translational accuracy. Its function is as follows. Interacts with and stabilizes bases of the 16S rRNA that are involved in tRNA selection in the A site and with the mRNA backbone. Located at the interface of the 30S and 50S subunits, it traverses the body of the 30S subunit contacting proteins on the other side and probably holding the rRNA structure together. The combined cluster of proteins S8, S12 and S17 appears to hold together the shoulder and platform of the 30S subunit. The sequence is that of Small ribosomal subunit protein uS12 from Clostridium botulinum (strain Alaska E43 / Type E3).